Here is a 107-residue protein sequence, read N- to C-terminus: Quaternary ammonium compound-resistance protein QacH (107 aa).

A run of 4 helical transmembrane segments spans residues 1–21, 26–46, 57–77, and 84–104; these read MPYLYLLLSIVSEVIGSAFLK, FSKLYPTITTIISFLICFYFL, ITYASWAGLGLVLTTIVSVLI, and LISIISIILIIFGVVLLNTFG.

The protein belongs to the drug/metabolite transporter (DMT) superfamily. Small multidrug resistance (SMR) (TC 2.A.7.1) family.

It localises to the cell membrane. Functionally, multidrug exporter. Is implicated for the resistance to bacteriocidal quaternary ammonium compounds. The sequence is that of Quaternary ammonium compound-resistance protein QacH (qacH) from Staphylococcus saprophyticus.